The following is a 522-amino-acid chain: Protein nucleotidyltransferase YdiU (522 aa).

ATP contacts are provided by Gly-109, Gly-111, Arg-112, Lys-132, Asp-144, Gly-145, Arg-195, and Arg-202. Asp-271 functions as the Proton acceptor in the catalytic mechanism. Mg(2+) is bound by residues Asn-272 and Asp-281. Position 281 (Asp-281) interacts with ATP.

This sequence belongs to the SELO family. It depends on Mg(2+) as a cofactor. Mn(2+) is required as a cofactor.

It carries out the reaction L-seryl-[protein] + ATP = 3-O-(5'-adenylyl)-L-seryl-[protein] + diphosphate. The catalysed reaction is L-threonyl-[protein] + ATP = 3-O-(5'-adenylyl)-L-threonyl-[protein] + diphosphate. The enzyme catalyses L-tyrosyl-[protein] + ATP = O-(5'-adenylyl)-L-tyrosyl-[protein] + diphosphate. It catalyses the reaction L-histidyl-[protein] + UTP = N(tele)-(5'-uridylyl)-L-histidyl-[protein] + diphosphate. It carries out the reaction L-seryl-[protein] + UTP = O-(5'-uridylyl)-L-seryl-[protein] + diphosphate. The catalysed reaction is L-tyrosyl-[protein] + UTP = O-(5'-uridylyl)-L-tyrosyl-[protein] + diphosphate. Functionally, nucleotidyltransferase involved in the post-translational modification of proteins. It can catalyze the addition of adenosine monophosphate (AMP) or uridine monophosphate (UMP) to a protein, resulting in modifications known as AMPylation and UMPylation. This Burkholderia vietnamiensis (strain G4 / LMG 22486) (Burkholderia cepacia (strain R1808)) protein is Protein nucleotidyltransferase YdiU.